Consider the following 697-residue polypeptide: DNA ligase (697 aa).

NAD(+) is bound by residues 36–40 (DAEYD), 85–86 (SL), and Glu123. Lys125 serves as the catalytic N6-AMP-lysine intermediate. The NAD(+) site is built by Arg146, Glu182, Lys320, and Lys344. 4 residues coordinate Zn(2+): Cys438, Cys441, Cys456, and Cys462. Residues 619–697 (PQGNTLAGKT…EDGLKALLGV (79 aa)) form the BRCT domain.

The protein belongs to the NAD-dependent DNA ligase family. LigA subfamily. Requires Mg(2+) as cofactor. The cofactor is Mn(2+).

The enzyme catalyses NAD(+) + (deoxyribonucleotide)n-3'-hydroxyl + 5'-phospho-(deoxyribonucleotide)m = (deoxyribonucleotide)n+m + AMP + beta-nicotinamide D-nucleotide.. Its function is as follows. DNA ligase that catalyzes the formation of phosphodiester linkages between 5'-phosphoryl and 3'-hydroxyl groups in double-stranded DNA using NAD as a coenzyme and as the energy source for the reaction. It is essential for DNA replication and repair of damaged DNA. The sequence is that of DNA ligase from Bordetella petrii (strain ATCC BAA-461 / DSM 12804 / CCUG 43448).